A 279-amino-acid polypeptide reads, in one-letter code: uncharacterized protein (279 aa).

Positions 1-31 (MLVQSRTLVTAILSCSLVFGTTVNGASVAIA) are cleaved as a signal peptide.

This is an uncharacterized protein from Corynebacterium glutamicum (strain ATCC 13032 / DSM 20300 / JCM 1318 / BCRC 11384 / CCUG 27702 / LMG 3730 / NBRC 12168 / NCIMB 10025 / NRRL B-2784 / 534).